A 138-amino-acid polypeptide reads, in one-letter code: MAEKLKVDLVTPYKKILSEEVDEITATGALGEFSVLPGHAPFLTSLKIGELTYKKSGQIVHLALNWGYFEVEDDKVTVLVETAERADEIDLERAKAALGRAEAALKKLSPEDKDYRVMEAALERALIRMQVAGKAARK.

Belongs to the ATPase epsilon chain family. F-type ATPases have 2 components, CF(1) - the catalytic core - and CF(0) - the membrane proton channel. CF(1) has five subunits: alpha(3), beta(3), gamma(1), delta(1), epsilon(1). CF(0) has three main subunits: a, b and c.

It is found in the cell inner membrane. In terms of biological role, produces ATP from ADP in the presence of a proton gradient across the membrane. The sequence is that of ATP synthase epsilon chain from Geobacter sulfurreducens (strain ATCC 51573 / DSM 12127 / PCA).